A 35-amino-acid polypeptide reads, in one-letter code: Photosystem II reaction center protein T (35 aa).

A helical membrane pass occupies residues Ala3–Phe23.

This sequence belongs to the PsbT family. In terms of assembly, PSII is composed of 1 copy each of membrane proteins PsbA, PsbB, PsbC, PsbD, PsbE, PsbF, PsbH, PsbI, PsbJ, PsbK, PsbL, PsbM, PsbT, PsbY, PsbZ, Psb30/Ycf12, at least 3 peripheral proteins of the oxygen-evolving complex and a large number of cofactors. It forms dimeric complexes.

The protein resides in the plastid. It localises to the chloroplast thylakoid membrane. Found at the monomer-monomer interface of the photosystem II (PS II) dimer, plays a role in assembly and dimerization of PSII. PSII is a light-driven water plastoquinone oxidoreductase, using light energy to abstract electrons from H(2)O, generating a proton gradient subsequently used for ATP formation. The sequence is that of Photosystem II reaction center protein T from Cabomba caroliniana (Carolina fanwort).